A 167-amino-acid polypeptide reads, in one-letter code: Brain ribonuclease (167 aa).

An N-terminal signal peptide occupies residues 1 to 26 (MALKSLVLLSLLVLVLLLVQVQPSLG). Lys-33 and Arg-36 together coordinate substrate. The active-site Proton acceptor is His-38. Cystine bridges form between Cys-52–Cys-110, Cys-66–Cys-121, Cys-84–Cys-136, and Cys-91–Cys-98. Substrate is bound at residue 67–71 (KPVNT). N-linked (GlcNAc...) asparagine glycosylation occurs at Asn-88. Lys-92 and Arg-111 together coordinate substrate. The active-site Proton donor is His-145. Thr-155 is a glycosylation site (O-linked (GalNAc...) threonine). O-linked (GalNAc...) serine glycosylation is present at Ser-159.

Belongs to the pancreatic ribonuclease family.

The protein localises to the secreted. The sequence is that of Brain ribonuclease (BRN) from Bos taurus (Bovine).